The sequence spans 1303 residues: Protein STU1 (1303 aa).

Disordered stretches follow at residues 239-259 (RGSD…NTPV), 531-664 (SQRE…GAVS), and 953-977 (EASD…NSEH). The span at 249–259 (RANTPRSNTPV) shows a compositional bias: polar residues. Residues 554–568 (SLKEAILEKNKELRQ) show a composition bias toward basic and acidic residues. The segment covering 573-583 (SRNSGEQSTKI) has biased composition (polar residues). Basic and acidic residues predominate over residues 596–609 (SRLEKSLLRPDVGH). Residues 618–629 (SSWTYPSTQSGP) are compositionally biased toward polar residues. The span at 634-648 (KQRERSKTEVHKKSP) shows a compositional bias: basic and acidic residues. Composition is skewed to polar residues over residues 653 to 664 (RPSSRLDTGAVS) and 955 to 972 (SDSS…SSKR).

The protein belongs to the CLASP family. In terms of assembly, interacts with microtubules.

It localises to the cytoplasm. The protein resides in the cytoskeleton. It is found in the nucleus. Its subcellular location is the spindle. Microtubule binding protein that promotes the stabilization of dynamic microtubules. Required for mitotic spindle formation. This is Protein STU1 (STU1) from Candida albicans (strain SC5314 / ATCC MYA-2876) (Yeast).